The primary structure comprises 198 residues: Small ribosomal subunit protein uS4 (198 aa).

One can recognise an S4 RNA-binding domain in the interval 91–151; it reads SRLDNIVYRL…EKSKNLKIVE (61 aa).

It belongs to the universal ribosomal protein uS4 family. In terms of assembly, part of the 30S ribosomal subunit. Contacts protein S5. The interaction surface between S4 and S5 is involved in control of translational fidelity.

Its function is as follows. One of the primary rRNA binding proteins, it binds directly to 16S rRNA where it nucleates assembly of the body of the 30S subunit. Functionally, with S5 and S12 plays an important role in translational accuracy. This chain is Small ribosomal subunit protein uS4, found in Phytoplasma australiense.